A 104-amino-acid chain; its full sequence is N(4)-acetylcytidine amidohydrolase (104 aa).

An ASCH domain is found at 7 to 93 (MTFFSRFEAD…EVIQEIYPGI (87 aa)). Residue K22 is the Proton acceptor of the active site. The active-site Nucleophile is T25. The active-site Proton donor is E75.

It belongs to the N(4)-acetylcytidine amidohydrolase family.

It carries out the reaction N(4)-acetylcytidine + H2O = cytidine + acetate + H(+). It catalyses the reaction N(4)-acetyl-2'-deoxycytidine + H2O = 2'-deoxycytidine + acetate + H(+). The catalysed reaction is N(4)-acetylcytosine + H2O = cytosine + acetate + H(+). Catalyzes the hydrolysis of N(4)-acetylcytidine (ac4C). This Vibrio vulnificus (strain YJ016) protein is N(4)-acetylcytidine amidohydrolase.